Reading from the N-terminus, the 451-residue chain is Protein NINJA homolog 1 (451 aa).

Disordered stretches follow at residues 1 to 223 (MDDE…QGNP), 321 to 346 (ISQA…DDKK), and 427 to 451 (DAPG…SAQN). Residues 23-35 (KARDAPLEPKAEP) show a composition bias toward basic and acidic residues. 3 stretches are compositionally biased toward polar residues: residues 38 to 49 (EESSSKGVSQTP), 86 to 103 (PGSS…QKPV), and 143 to 153 (ISISTDDGSTG). Residues 154–163 (ENEDVAESEA) show a composition bias toward acidic residues. Low complexity predominate over residues 207–216 (SFSGSESSSG).

Belongs to the Ninja family. In terms of assembly, interacts with TIFY10C/JAZ8. Interacts with TIFY11A/JAZ9.

The protein resides in the nucleus. The chain is Protein NINJA homolog 1 from Oryza sativa subsp. japonica (Rice).